We begin with the raw amino-acid sequence, 208 residues long: Cysteine-rich protein 2 (208 aa).

Residues 5–57 (CPKCDKTVCFAEKVSSLGKDWHKFCLKCERCSKTLTPGGHAEHDGKPFCHKPC) enclose the LIM zinc-binding 1 domain. K23 is modified (N6-acetyllysine). A disordered region spans residues 98–119 (AEERKASGPPKGPSRASSVTTF). Position 104 is a phosphoserine (S104). The LIM zinc-binding 2 domain maps to 126–178 (CPRCSKKVYFAEKVTSLGKDWHRPCLHCERCGKTLTPGGHAEHDGQPYCHKPC). An N6-acetyllysine mark is found at K138 and K144.

As to quaternary structure, interacts with TGFB1I1.

This Pongo abelii (Sumatran orangutan) protein is Cysteine-rich protein 2 (CRIP2).